We begin with the raw amino-acid sequence, 493 residues long: Glutamate synthase [NADPH] small chain (493 aa).

Residue 299–313 coordinates NADP(+); that stretch reads GGGDTGADCVATALR.

It belongs to the glutamate synthase family. In terms of assembly, aggregate of 4 catalytic active heterodimers, consisting of a large and a small subunit.

It catalyses the reaction 2 L-glutamate + NADP(+) = L-glutamine + 2-oxoglutarate + NADPH + H(+). It functions in the pathway amino-acid biosynthesis; L-glutamate biosynthesis via GLT pathway; L-glutamate from 2-oxoglutarate and L-glutamine (NADP(+) route): step 1/1. The protein operates within energy metabolism; nitrogen metabolism. The polypeptide is Glutamate synthase [NADPH] small chain (gltB) (Bacillus subtilis (strain 168)).